The following is a 272-amino-acid chain: NH(3)-dependent NAD(+) synthetase (272 aa).

45-52 serves as a coordination point for ATP; the sequence is GISGGQDS. Aspartate 51 lines the Mg(2+) pocket. Arginine 138 provides a ligand contact to deamido-NAD(+). Threonine 158 lines the ATP pocket. Glutamate 163 contacts Mg(2+). Residues lysine 171 and aspartate 178 each contribute to the deamido-NAD(+) site. Lysine 187 and threonine 209 together coordinate ATP. A deamido-NAD(+)-binding site is contributed by 258–259; the sequence is HK.

This sequence belongs to the NAD synthetase family. In terms of assembly, homodimer.

The catalysed reaction is deamido-NAD(+) + NH4(+) + ATP = AMP + diphosphate + NAD(+) + H(+). It participates in cofactor biosynthesis; NAD(+) biosynthesis; NAD(+) from deamido-NAD(+) (ammonia route): step 1/1. In terms of biological role, catalyzes the ATP-dependent amidation of deamido-NAD to form NAD. Uses ammonia as a nitrogen source. In Bacillus cereus (strain ATCC 10987 / NRS 248), this protein is NH(3)-dependent NAD(+) synthetase.